Consider the following 309-residue polypeptide: Tagatose-6-phosphate kinase (309 aa).

This sequence belongs to the carbohydrate kinase PfkB family. LacC subfamily.

The catalysed reaction is D-tagatofuranose 6-phosphate + ATP = D-tagatofuranose 1,6-bisphosphate + ADP + H(+). Its pathway is carbohydrate metabolism; D-tagatose 6-phosphate degradation; D-glyceraldehyde 3-phosphate and glycerone phosphate from D-tagatose 6-phosphate: step 1/2. This is Tagatose-6-phosphate kinase from Streptococcus pyogenes serotype M28 (strain MGAS6180).